Reading from the N-terminus, the 484-residue chain is Glutamate--tRNA ligase (484 aa).

The short motif at Pro-11–Asn-21 is the 'HIGH' region element. Positions Lys-255–Arg-259 match the 'KMSKS' region motif. Lys-258 is a binding site for ATP.

Belongs to the class-I aminoacyl-tRNA synthetase family. Glutamate--tRNA ligase type 1 subfamily. Monomer.

Its subcellular location is the cytoplasm. The enzyme catalyses tRNA(Glu) + L-glutamate + ATP = L-glutamyl-tRNA(Glu) + AMP + diphosphate. Its function is as follows. Catalyzes the attachment of glutamate to tRNA(Glu) in a two-step reaction: glutamate is first activated by ATP to form Glu-AMP and then transferred to the acceptor end of tRNA(Glu). The chain is Glutamate--tRNA ligase from Streptococcus thermophilus (strain CNRZ 1066).